Consider the following 438-residue polypeptide: Proline--tRNA ligase (438 aa).

Belongs to the class-II aminoacyl-tRNA synthetase family. ProS type 2 subfamily. Homodimer.

It localises to the cytoplasm. It carries out the reaction tRNA(Pro) + L-proline + ATP = L-prolyl-tRNA(Pro) + AMP + diphosphate. In terms of biological role, catalyzes the attachment of proline to tRNA(Pro) in a two-step reaction: proline is first activated by ATP to form Pro-AMP and then transferred to the acceptor end of tRNA(Pro). In Gluconobacter oxydans (strain 621H) (Gluconobacter suboxydans), this protein is Proline--tRNA ligase.